The sequence spans 277 residues: Glycerol-3-phosphate acyltransferase (277 aa).

5 helical membrane-spanning segments follow: residues 3–23 (LFIFLILVGYLMGSINSAIIV), 55–75 (IMVMVFDALKGILPVILAKLL), 79–99 (PVTVAFTALAAVVGHMYPVFF), 111–131 (IGALLAFHFVIGVMVAATWLL), and 155–175 (LILVGNLNIFPPLFMITILVL). The interval 207-277 (SPATSAEQEF…PKTKTVKEKE (71 aa)) is disordered. The segment covering 216–239 (FPGKEVIDTNIDETEKTEQAEAVK) has biased composition (basic and acidic residues). 2 stretches are compositionally biased toward basic residues: residues 240-253 (KPKAKKATTKAKKT) and 262-271 (KPRSTKPKTK).

Belongs to the PlsY family. In terms of assembly, probably interacts with PlsX.

Its subcellular location is the cell inner membrane. The enzyme catalyses an acyl phosphate + sn-glycerol 3-phosphate = a 1-acyl-sn-glycero-3-phosphate + phosphate. It participates in lipid metabolism; phospholipid metabolism. In terms of biological role, catalyzes the transfer of an acyl group from acyl-phosphate (acyl-PO(4)) to glycerol-3-phosphate (G3P) to form lysophosphatidic acid (LPA). This enzyme utilizes acyl-phosphate as fatty acyl donor, but not acyl-CoA or acyl-ACP. This chain is Glycerol-3-phosphate acyltransferase, found in Legionella pneumophila (strain Paris).